Here is a 409-residue protein sequence, read N- to C-terminus: Dihydrolipoyllysine-residue succinyltransferase component of 2-oxoglutarate dehydrogenase complex (409 aa).

Residues 2–77 (AIEILVPDLP…VSKQLLGKIS (76 aa)) enclose the Lipoyl-binding domain. The residue at position 43 (K43) is an N6-lipoyllysine. The span at 83–107 (DVSSATLKATNEPTPSDRQNAAIEN) shows a compositional bias: polar residues. Residues 83–114 (DVSSATLKATNEPTPSDRQNAAIENSHNHNAD) are disordered. In terms of domain architecture, Peripheral subunit-binding (PSBD) spans 114 to 151 (DQSPVIRRLLAEHDLQADQIQGSGVGGRLTREDIEREI). Residues H380 and D384 contribute to the active site.

It belongs to the 2-oxoacid dehydrogenase family. As to quaternary structure, forms a 24-polypeptide structural core with octahedral symmetry. Part of the 2-oxoglutarate dehydrogenase (OGDH) complex composed of E1 (2-oxoglutarate dehydrogenase), E2 (dihydrolipoamide succinyltransferase) and E3 (dihydrolipoamide dehydrogenase); the complex contains multiple copies of the three enzymatic components (E1, E2 and E3). It depends on (R)-lipoate as a cofactor.

The catalysed reaction is N(6)-[(R)-dihydrolipoyl]-L-lysyl-[protein] + succinyl-CoA = N(6)-[(R)-S(8)-succinyldihydrolipoyl]-L-lysyl-[protein] + CoA. Its pathway is amino-acid degradation; L-lysine degradation via saccharopine pathway; glutaryl-CoA from L-lysine: step 6/6. Functionally, E2 component of the 2-oxoglutarate dehydrogenase (OGDH) complex which catalyzes the second step in the conversion of 2-oxoglutarate to succinyl-CoA and CO(2). The sequence is that of Dihydrolipoyllysine-residue succinyltransferase component of 2-oxoglutarate dehydrogenase complex (sucB) from Haemophilus influenzae (strain ATCC 51907 / DSM 11121 / KW20 / Rd).